The sequence spans 130 residues: Glycine cleavage system H protein (130 aa).

Positions 24-106 (TLTIGITDHA…YGEGWIMRIR (83 aa)) constitute a Lipoyl-binding domain. At lysine 65 the chain carries N6-lipoyllysine. The tract at residues 111 to 130 (DDLEQLLDPEDYQDLVADEE) is disordered.

Belongs to the GcvH family. In terms of assembly, the glycine cleavage system is composed of four proteins: P, T, L and H. Requires (R)-lipoate as cofactor.

In terms of biological role, the glycine cleavage system catalyzes the degradation of glycine. The H protein shuttles the methylamine group of glycine from the P protein to the T protein. This chain is Glycine cleavage system H protein, found in Alkalilimnicola ehrlichii (strain ATCC BAA-1101 / DSM 17681 / MLHE-1).